The sequence spans 159 residues: 2-C-methyl-D-erythritol 2,4-cyclodiphosphate synthase (159 aa).

The a divalent metal cation site is built by Asp10 and His12. 4-CDP-2-C-methyl-D-erythritol 2-phosphate is bound by residues 10–12 (DVH) and 36–37 (HS). His44 contacts a divalent metal cation. 4-CDP-2-C-methyl-D-erythritol 2-phosphate contacts are provided by residues 58-60 (DIG), 63-67 (FPDTD), 102-108 (AQAPRMA), 134-137 (TTSE), Phe141, and Arg144.

Belongs to the IspF family. Homotrimer. Requires a divalent metal cation as cofactor.

The catalysed reaction is 4-CDP-2-C-methyl-D-erythritol 2-phosphate = 2-C-methyl-D-erythritol 2,4-cyclic diphosphate + CMP. Its pathway is isoprenoid biosynthesis; isopentenyl diphosphate biosynthesis via DXP pathway; isopentenyl diphosphate from 1-deoxy-D-xylulose 5-phosphate: step 4/6. Involved in the biosynthesis of isopentenyl diphosphate (IPP) and dimethylallyl diphosphate (DMAPP), two major building blocks of isoprenoid compounds. Catalyzes the conversion of 4-diphosphocytidyl-2-C-methyl-D-erythritol 2-phosphate (CDP-ME2P) to 2-C-methyl-D-erythritol 2,4-cyclodiphosphate (ME-CPP) with a corresponding release of cytidine 5-monophosphate (CMP). In Cellvibrio japonicus (strain Ueda107) (Pseudomonas fluorescens subsp. cellulosa), this protein is 2-C-methyl-D-erythritol 2,4-cyclodiphosphate synthase.